The following is a 407-amino-acid chain: Phosphopentomutase (407 aa).

Mn(2+) is bound by residues D10, D306, H311, D347, H348, and H359.

This sequence belongs to the phosphopentomutase family. It depends on Mn(2+) as a cofactor.

The protein resides in the cytoplasm. The catalysed reaction is 2-deoxy-alpha-D-ribose 1-phosphate = 2-deoxy-D-ribose 5-phosphate. The enzyme catalyses alpha-D-ribose 1-phosphate = D-ribose 5-phosphate. It participates in carbohydrate degradation; 2-deoxy-D-ribose 1-phosphate degradation; D-glyceraldehyde 3-phosphate and acetaldehyde from 2-deoxy-alpha-D-ribose 1-phosphate: step 1/2. Isomerase that catalyzes the conversion of deoxy-ribose 1-phosphate (dRib-1-P) and ribose 1-phosphate (Rib-1-P) to deoxy-ribose 5-phosphate (dRib-5-P) and ribose 5-phosphate (Rib-5-P), respectively. The polypeptide is Phosphopentomutase (Escherichia coli O127:H6 (strain E2348/69 / EPEC)).